Reading from the N-terminus, the 135-residue chain is Galectin-1 (135 aa).

An N-acetylalanine modification is found at A2. Residues 4–135 enclose the Galectin domain; sequence GLVASNLNLK…DFKIKCVAFE (132 aa). Residues K13 and K29 each carry the N6-acetyllysine modification. S30 carries the phosphoserine modification. Residues 45 to 49, H53, N62, and 69 to 72 each bind a beta-D-galactoside; these read HFNPR and WGAE. Position 108 is an N6-acetyllysine; alternate (K108). K108 is modified (N6-succinyllysine; alternate). An N6-acetyllysine modification is found at K128.

In terms of assembly, homodimer. Binds LGALS3BP. Interacts with CD2, CD3, CD4, CD6, CD7, CD43, ALCAM and CD45. Interacts with laminin (via poly-N-acetyllactosamine). Interacts with SUSD2. Interacts with cargo receptor TMED10; the interaction mediates the translocation from the cytoplasm into the ERGIC (endoplasmic reticulum-Golgi intermediate compartment) and thereby secretion.

The protein resides in the secreted. Its subcellular location is the extracellular space. It is found in the extracellular matrix. It localises to the cytoplasm. In terms of biological role, lectin that binds beta-galactoside and a wide array of complex carbohydrates. Plays a role in regulating apoptosis, cell proliferation and cell differentiation. Inhibits CD45 protein phosphatase activity and therefore the dephosphorylation of Lyn kinase. Strong inducer of T-cell apoptosis. Has hemagglutinating activity towards human erythrocytes. This is Galectin-1 from Capra hircus (Goat).